Here is a 470-residue protein sequence, read N- to C-terminus: 63 kDa sperm flagellar membrane protein (470 aa).

Positions 1–25 (MFCHLHCMLVVFSLLLTLTGSFVNA) are cleaved as a signal peptide. Residues 41–80 (PPDPCASNPCTIASTHCVAAGESHTCECRPGYFETNGNCT) form the EGF-like 1 domain. Disulfide bonds link Cys-45/Cys-57, Cys-50/Cys-66, and Cys-68/Cys-79. 3 N-linked (GlcNAc...) asparagine glycosylation sites follow: Asn-78, Asn-170, and Asn-219. Positions 81-205 (VAQQFAGSFS…STITVSDFDE (125 aa)) constitute an SEA domain. The region spanning 202-250 (DFDECASADDNDCDPNANCTNTAGSFTCECDTELYDNSPNTEEPGRVCI) is the EGF-like 2; calcium-binding domain. Intrachain disulfides connect Cys-206–Cys-220, Cys-214–Cys-229, Cys-231–Cys-249, Cys-253–Cys-265, Cys-258–Cys-277, and Cys-279–Cys-291. The EGF-like 3 domain maps to 249–292 (CIAPCDPGLCTRPNEICNNGGTIEDDNLCKCIEGYDYTQYGDCD). Asn-322 is a glycosylation site (N-linked (GlcNAc...) asparagine). The GPI-anchor amidated glycine moiety is linked to residue Gly-446. The propeptide at 447–470 (SQRHLPVCGVLSLVVTTLLALMLH) is removed in mature form.

In terms of tissue distribution, sperm.

The protein resides in the cell projection. It is found in the cilium. It localises to the flagellum membrane. In Strongylocentrotus purpuratus (Purple sea urchin), this protein is 63 kDa sperm flagellar membrane protein.